The primary structure comprises 451 residues: UPF0761 membrane protein Hhal_0704 (451 aa).

6 consecutive transmembrane segments (helical) span residues 66–86 (LLAI…FPVF), 122–142 (ELTA…LNTI), 162–182 (FMVY…SVAS), 204–224 (LLNL…YSLV), 228–248 (SVPV…FELA), and 268–288 (ALAA…VILI).

The protein belongs to the UPF0761 family.

Its subcellular location is the cell inner membrane. The polypeptide is UPF0761 membrane protein Hhal_0704 (Halorhodospira halophila (strain DSM 244 / SL1) (Ectothiorhodospira halophila (strain DSM 244 / SL1))).